Here is a 477-residue protein sequence, read N- to C-terminus: Ribulose bisphosphate carboxylase large chain (477 aa).

Positions 1–2 (MS) are excised as a propeptide. The residue at position 3 (P3) is an N-acetylproline. An N6,N6,N6-trimethyllysine modification is found at K14. T173 is a binding site for substrate. The active-site Proton acceptor is the K175. Position 177 (K177) interacts with substrate. The Mg(2+) site is built by K201, D203, and E204. K201 carries the N6-carboxylysine modification. H294 functions as the Proton acceptor in the catalytic mechanism. Residues R295, H327, and S379 each coordinate substrate.

Belongs to the RuBisCO large chain family. Type I subfamily. As to quaternary structure, heterohexadecamer of 8 large chains and 8 small chains; disulfide-linked. The disulfide link is formed within the large subunit homodimers. It depends on Mg(2+) as a cofactor. Post-translationally, the disulfide bond which can form in the large chain dimeric partners within the hexadecamer appears to be associated with oxidative stress and protein turnover.

The protein resides in the plastid. Its subcellular location is the chloroplast. The enzyme catalyses 2 (2R)-3-phosphoglycerate + 2 H(+) = D-ribulose 1,5-bisphosphate + CO2 + H2O. It catalyses the reaction D-ribulose 1,5-bisphosphate + O2 = 2-phosphoglycolate + (2R)-3-phosphoglycerate + 2 H(+). Functionally, ruBisCO catalyzes two reactions: the carboxylation of D-ribulose 1,5-bisphosphate, the primary event in carbon dioxide fixation, as well as the oxidative fragmentation of the pentose substrate in the photorespiration process. Both reactions occur simultaneously and in competition at the same active site. This chain is Ribulose bisphosphate carboxylase large chain, found in Gerbera jamesonii (Transvaal daisy).